A 633-amino-acid chain; its full sequence is Pesticidal crystal protein Cry2Aa (633 aa).

Belongs to the delta endotoxin family.

In terms of biological role, promotes colloidosmotic lysis by binding to the midgut epithelial cells of both dipteran (Aedes aegypti) and lepidopteran (Manduca sexta) larvae. The sequence is that of Pesticidal crystal protein Cry2Aa (cry2Aa) from Bacillus thuringiensis subsp. kenyae.